The chain runs to 890 residues: ATP-dependent DNA helicase DDX11 (890 aa).

Residues 4 to 424 form the Helicase ATP-binding domain; the sequence is KSGRFPFPFQ…KNLMYIKQIL (421 aa). Residue 39 to 46 participates in ATP binding; that stretch reads SPTGTGKS. The span at 71–85 shows a compositional bias: basic and acidic residues; it reads LLEGQKDSDVVKEKN. Disordered regions lie at residues 71 to 95 and 176 to 199; these read LLEG…EPDW and EYES…DDDD. 4 residues coordinate [4Fe-4S] cluster: Cys-246, Cys-264, Cys-294, and Cys-329. Positions 372 to 375 match the DEAH box motif; sequence DEAH.

It belongs to the DEAD box helicase family. DEAH subfamily. DDX11/CHL1 sub-subfamily. The cofactor is [4Fe-4S] cluster.

The protein resides in the nucleus. It localises to the nucleolus. The protein localises to the cytoplasm. It is found in the cytoskeleton. Its subcellular location is the spindle pole. The protein resides in the midbody. It localises to the microtubule organizing center. The protein localises to the centrosome. It carries out the reaction Couples ATP hydrolysis with the unwinding of duplex DNA at the replication fork by translocating in the 5'-3' direction. This creates two antiparallel DNA single strands (ssDNA). The leading ssDNA polymer is the template for DNA polymerase III holoenzyme which synthesizes a continuous strand.. The catalysed reaction is ATP + H2O = ADP + phosphate + H(+). Its function is as follows. DNA-dependent ATPase and ATP-dependent DNA helicase that participates in various functions in genomic stability, including DNA replication, DNA repair and heterochromatin organization as well as in ribosomal RNA synthesis. Plays a role in DNA double-strand break (DSB) repair at the DNA replication fork during DNA replication recovery from DNA damage. Plays a role in the regulation of sister chromatid cohesion and mitotic chromosome segregation. Stimulates 5'-single-stranded DNA flap endonuclease activity of FEN1 in an ATP- and helicase-independent manner. Also plays a role in heterochromatin organization. Involved in rRNA transcription activation through binding to active hypomethylated rDNA gene loci by recruiting UBTF and the RNA polymerase Pol I transcriptional machinery. Plays a role in embryonic development. Associates with chromatin at DNA replication fork regions. Binds to single- and double-stranded DNAs. The sequence is that of ATP-dependent DNA helicase DDX11 from Danio rerio (Zebrafish).